The sequence spans 400 residues: Serpin E3 (400 aa).

A signal peptide spans 1–19; the sequence is MQSLLLALLLLPVCSPGGA. An N-linked (GlcNAc...) asparagine glycan is attached at N46.

Belongs to the serpin family.

The protein resides in the secreted. Functionally, probable serine protease inhibitor. This Bos taurus (Bovine) protein is Serpin E3 (SERPINE3).